A 478-amino-acid chain; its full sequence is Sialidase-4 (478 aa).

The FRIP motif motif lies at 22–25; that stretch reads YRVP. Substrate-binding residues include Arg-23 and Arg-43. Residues Asp-47 and Asp-48 each act as proton acceptor in the active site. A BNR 1 repeat occupies 127-138; that stretch reads VTSCDAGLTWGS. Positions 177 and 179 each coordinate substrate. A BNR 2 repeat occupies 200 to 211; it reads FYSDDHGISWHC. Glu-222 and Arg-238 together coordinate substrate. The stretch at 247–258 is one BNR 3 repeat; the sequence is ALSADEGTSFLP. Disordered regions lie at residues 285–307 and 335–359; these read IEPQDDRWTGSPRNTPHSPCFNL and SRSPENHGLEPGSDGDKTSWTPECP. Substrate is bound at residue Arg-383. Tyr-413 serves as the catalytic Nucleophile. The active site involves Glu-434.

The protein belongs to the glycosyl hydrolase 33 family. In terms of tissue distribution, highly expressed in brain, particularly in hippocampus, and at lower levels in liver and spleen. Expressed in hippocampal neurons (at protein level).

Its subcellular location is the cell membrane. The protein localises to the endoplasmic reticulum membrane. The protein resides in the microsome membrane. It is found in the mitochondrion inner membrane. It localises to the mitochondrion outer membrane. Its subcellular location is the cell projection. The protein localises to the neuron projection. The protein resides in the lysosome lumen. It catalyses the reaction Hydrolysis of alpha-(2-&gt;3)-, alpha-(2-&gt;6)-, alpha-(2-&gt;8)- glycosidic linkages of terminal sialic acid residues in oligosaccharides, glycoproteins, glycolipids, colominic acid and synthetic substrates.. It carries out the reaction a ganglioside GM3 + H2O = a beta-D-galactosyl-(1-&gt;4)-beta-D-glucosyl-(1&lt;-&gt;1)-ceramide + N-acetylneuraminate. The enzyme catalyses a ganglioside GM3 (d18:1(4E)) + H2O = a beta-D-Gal-(1-&gt;4)-beta-D-Glc-(1&lt;-&gt;1)-Cer(d18:1(4E)) + N-acetylneuraminate. The catalysed reaction is a ganglioside GM2 + H2O = a ganglioside GA2 + N-acetylneuraminate. It catalyses the reaction a ganglioside GM2 (d18:1(4E)) + H2O = a ganglioside GA2 (d18:1(4E)) + N-acetylneuraminate. It carries out the reaction a ganglioside GD1a + H2O = a ganglioside GM1 + N-acetylneuraminate. The enzyme catalyses a ganglioside GD1a (d18:1(4E)) + H2O = a ganglioside GM1 (d18:1(4E)) + N-acetylneuraminate. The catalysed reaction is a ganglioside GD3 + H2O = a ganglioside GM3 + N-acetylneuraminate. It catalyses the reaction a ganglioside GD3 (d18:1(4E)) + H2O = a ganglioside GM3 (d18:1(4E)) + N-acetylneuraminate. In terms of biological role, exo-alpha-sialidase that catalyzes the hydrolytic cleavage of the terminal sialic acid (N-acetylneuraminic acid, Neu5Ac) of a glycan moiety in the catabolism of glycolipids, glycoproteins and oligosacharides. Efficiently hydrolyzes gangliosides including alpha-(2-&gt;3)-sialylated GD1a and GM3 and alpha-(2-&gt;8)-sialylated GD3. Hydrolyzes poly-alpha-(2-&gt;8)-sialylated neural cell adhesion molecule NCAM1 likely at growth cones, suppressing neurite outgrowth in hippocampal neurons. May desialylate sialyl Lewis A and X antigens at the cell surface, down-regulating these glycan epitopes recognized by SELE/E selectin in the initiation of cell adhesion and extravasation. Has sialidase activity toward mucin, fetuin and sialyllactose. This chain is Sialidase-4 (Neu4), found in Mus musculus (Mouse).